The primary structure comprises 338 residues: Lipoate-protein ligase A (338 aa).

Positions 29 to 216 constitute a BPL/LPL catalytic domain; that stretch reads SPDQRVLFLW…AFFNYYDEKV (188 aa). Residues R71, 76-79, and K134 contribute to the ATP site; that span reads GAVF. Residue K134 participates in (R)-lipoate binding.

Belongs to the LplA family. In terms of assembly, monomer.

Its subcellular location is the cytoplasm. It carries out the reaction L-lysyl-[lipoyl-carrier protein] + (R)-lipoate + ATP = N(6)-[(R)-lipoyl]-L-lysyl-[lipoyl-carrier protein] + AMP + diphosphate + H(+). It participates in protein modification; protein lipoylation via exogenous pathway; protein N(6)-(lipoyl)lysine from lipoate: step 1/2. The protein operates within protein modification; protein lipoylation via exogenous pathway; protein N(6)-(lipoyl)lysine from lipoate: step 2/2. Catalyzes both the ATP-dependent activation of exogenously supplied lipoate to lipoyl-AMP and the transfer of the activated lipoyl onto the lipoyl domains of lipoate-dependent enzymes. This is Lipoate-protein ligase A from Yersinia enterocolitica serotype O:8 / biotype 1B (strain NCTC 13174 / 8081).